Reading from the N-terminus, the 955-residue chain is Isoleucine--tRNA ligase (955 aa).

The 'HIGH' region motif lies at I58–H68. E552 provides a ligand contact to L-isoleucyl-5'-AMP. A 'KMSKS' region motif is present at residues K593–S597. Residue K596 coordinates ATP. The Zn(2+) site is built by C918, C921, C938, and C941.

It belongs to the class-I aminoacyl-tRNA synthetase family. IleS type 1 subfamily. As to quaternary structure, monomer. The cofactor is Zn(2+).

Its subcellular location is the cytoplasm. The enzyme catalyses tRNA(Ile) + L-isoleucine + ATP = L-isoleucyl-tRNA(Ile) + AMP + diphosphate. In terms of biological role, catalyzes the attachment of isoleucine to tRNA(Ile). As IleRS can inadvertently accommodate and process structurally similar amino acids such as valine, to avoid such errors it has two additional distinct tRNA(Ile)-dependent editing activities. One activity is designated as 'pretransfer' editing and involves the hydrolysis of activated Val-AMP. The other activity is designated 'posttransfer' editing and involves deacylation of mischarged Val-tRNA(Ile). The sequence is that of Isoleucine--tRNA ligase from Vesicomyosocius okutanii subsp. Calyptogena okutanii (strain HA).